The chain runs to 241 residues: 1-(5-phosphoribosyl)-5-[(5-phosphoribosylamino)methylideneamino] imidazole-4-carboxamide isomerase (241 aa).

The Proton acceptor role is filled by D8. Residue D130 is the Proton donor of the active site.

It belongs to the HisA/HisF family.

The protein resides in the cytoplasm. The catalysed reaction is 1-(5-phospho-beta-D-ribosyl)-5-[(5-phospho-beta-D-ribosylamino)methylideneamino]imidazole-4-carboxamide = 5-[(5-phospho-1-deoxy-D-ribulos-1-ylimino)methylamino]-1-(5-phospho-beta-D-ribosyl)imidazole-4-carboxamide. It functions in the pathway amino-acid biosynthesis; L-histidine biosynthesis; L-histidine from 5-phospho-alpha-D-ribose 1-diphosphate: step 4/9. The protein is 1-(5-phosphoribosyl)-5-[(5-phosphoribosylamino)methylideneamino] imidazole-4-carboxamide isomerase of Flavobacterium psychrophilum (strain ATCC 49511 / DSM 21280 / CIP 103535 / JIP02/86).